The sequence spans 263 residues: Type II restriction enzyme TthHB8I (263 aa).

The enzyme catalyses Endonucleolytic cleavage of DNA to give specific double-stranded fragments with terminal 5'-phosphates.. Its function is as follows. A P subtype restriction enzyme that recognizes the double-stranded sequence 5'-TCGA-3' and cleaves after T-1. The chain is Type II restriction enzyme TthHB8I (tthHB8IR) from Thermus thermophilus (strain ATCC 27634 / DSM 579 / HB8).